The chain runs to 203 residues: Small ribosomal subunit protein uS4 (203 aa).

The region spanning 92–164 is the S4 RNA-binding domain; it reads TRLDSVVYLL…LEENRIRNVP (73 aa).

This sequence belongs to the universal ribosomal protein uS4 family. In terms of assembly, part of the 30S ribosomal subunit. Contacts protein S5. The interaction surface between S4 and S5 is involved in control of translational fidelity.

Functionally, one of the primary rRNA binding proteins, it binds directly to 16S rRNA where it nucleates assembly of the body of the 30S subunit. In terms of biological role, with S5 and S12 plays an important role in translational accuracy. The sequence is that of Small ribosomal subunit protein uS4 from Opitutus terrae (strain DSM 11246 / JCM 15787 / PB90-1).